We begin with the raw amino-acid sequence, 358 residues long: UPF0283 membrane protein PM0909 (358 aa).

The next 3 helical transmembrane spans lie at 62–82, 90–110, and 213–233; these read LALTALLFCFAVIAQSIQWLV, WIYFVFSLVTCLVVLLGVSSL, and ALEAAVIVAVSPLAVIDMFFL.

Belongs to the UPF0283 family.

It is found in the cell inner membrane. The chain is UPF0283 membrane protein PM0909 from Pasteurella multocida (strain Pm70).